Here is a 586-residue protein sequence, read N- to C-terminus: MVGLKEELLKAIWHAFTALDLDRSGKVSKSQLKVLSHNLCTVLNVPHDPVALEEHFRDDDEGPVSNQGYMPYLNKFILEKVQGNFDKVEFNRMCWTLCAKKNLSKSPLLISDEDAFKVWVIFNFLSEDKYPLIIVPEEVEYLLKKLTEAMGAGWQQEQFDLYKIALNTSREGLSAWELIDLIGSGQFSKGMDRQTVSMAINEVFNELILDVLKQGYMLKKGHKRKNWTERWFVLKPNIISYYVSEDLKDKKGDIILDGNCCVEPLPDKDGKKCLFLIKCLDKSFEISASDKKKKQEWIQAIQTTVSLLRAGSPPPHKEARQKRKELRQKLLAEQEELERQMKELQTANENKQKELETVRKQLEAAAARAAEEEKKRLQTQVELQDRFSLELEREKMVRQKMEEQVAQKSSELEQYLQRVRELEEMYKQLQEALEVEKQARQDEETVRKLQARLLEEESAKRAELEKWHLQQQQTIQMTEAEKQELENQRMIKEQALQVAMQQLEQLELERKEALEQYEEVKKKLETAANNTRSWKDKVAHHEGLIRLIEPGSKNPHLITNWGPAAFTEAELEQRQKSWKGKKASSE.

A PH domain is found at 210-306 (DVLKQGYMLK…WIQAIQTTVS (97 aa)). Positions 316–538 (HKEARQKRKE…NNTRSWKDKV (223 aa)) form a coiled coil.

As to quaternary structure, the SWAP complex consists of NPM1, NCL, PARP1 and SWAP70. In terms of processing, tyrosine-phosphorylated.

Its subcellular location is the cytoplasm. It is found in the cell membrane. The protein resides in the nucleus. The protein localises to the cell projection. It localises to the lamellipodium. In terms of biological role, phosphatidylinositol 3,4,5-trisphosphate-dependent guanine nucleotide exchange factor (GEF) which, independently of RAS, transduces signals from tyrosine kinase receptors to RAC. It also mediates signaling of membrane ruffling. Regulates the actin cytoskeleton as an effector or adapter protein in response to agonist stimulated phosphatidylinositol (3,4)-bisphosphate production and cell protrusion. The polypeptide is Switch-associated protein 70 (SWAP70) (Gallus gallus (Chicken)).